The following is a 337-amino-acid chain: Delta-aminolevulinic acid dehydratase (337 aa).

The active-site Schiff-base intermediate with substrate is the Lys-205. Residues Arg-215 and Lys-229 each contribute to the 5-aminolevulinate site. Mg(2+) is bound at residue Glu-245. Residue Lys-260 is the Schiff-base intermediate with substrate of the active site. 5-aminolevulinate is bound by residues Ser-286 and Tyr-324.

This sequence belongs to the ALAD family. Homooctamer; formed by oligomerization of dimers. Mg(2+) serves as cofactor.

It carries out the reaction 2 5-aminolevulinate = porphobilinogen + 2 H2O + H(+). Its pathway is porphyrin-containing compound metabolism; protoporphyrin-IX biosynthesis; coproporphyrinogen-III from 5-aminolevulinate: step 1/4. Stimulated by magnesium ions. Catalyzes an early step in the biosynthesis of tetrapyrroles. Binds two molecules of 5-aminolevulinate per subunit, each at a distinct site, and catalyzes their condensation to form porphobilinogen. The sequence is that of Delta-aminolevulinic acid dehydratase (hemB) from Pseudomonas aeruginosa (strain ATCC 15692 / DSM 22644 / CIP 104116 / JCM 14847 / LMG 12228 / 1C / PRS 101 / PAO1).